We begin with the raw amino-acid sequence, 411 residues long: MATINNNYLKLKAGYLFPEISRRVNAFAEANPDAKIIRLGIGDVTEPLPEACRTAMIKAVEDMGDRNTFKGYGPEQGYAWLREKIAAQDFQARGANIDASEIFISDGSKCDTGNILEIFGHDNLIAVTDPVYPVYVDTNVMVGNTGDANDKGEFEGLVYLPITADNNFTAEIPSKKVDLIYLCFPNNPTGATATKEYLKAWVDYAKANNSIIFFDAAYEAYITDPSIPHSIYEIEGAREVAIEFRSFSKNAGFTGTRCALTVVPKTLTGKAADGSDVELWKLWNRRQSTKFNGVSYIVQRGAEAVYSEEGQAQIKGLVSFYLENAKIIREKLTAAGLSVYGGVNAPYVWVKTPNGLSSWEFFDKLLQTVNVVGTPGSGFGAAGEGYFRISAFNSRENVEEAMKRITKKFKV.

Residues Tyr15 and Gly42 each coordinate substrate. Pyridoxal 5'-phosphate contacts are provided by residues Tyr72, 108-109 (SK), Tyr132, Asn187, Tyr218, and 246-248 (SFS). Lys109, Tyr132, and Asn187 together coordinate substrate. N6-(pyridoxal phosphate)lysine is present on Lys249. Residues Arg257 and Asn292 each coordinate pyridoxal 5'-phosphate. Substrate-binding residues include Asn292 and Arg388.

The protein belongs to the class-I pyridoxal-phosphate-dependent aminotransferase family. LL-diaminopimelate aminotransferase subfamily. As to quaternary structure, homodimer. Requires pyridoxal 5'-phosphate as cofactor.

It catalyses the reaction (2S,6S)-2,6-diaminopimelate + 2-oxoglutarate = (S)-2,3,4,5-tetrahydrodipicolinate + L-glutamate + H2O + H(+). It functions in the pathway amino-acid biosynthesis; L-lysine biosynthesis via DAP pathway; LL-2,6-diaminopimelate from (S)-tetrahydrodipicolinate (aminotransferase route): step 1/1. Functionally, involved in the synthesis of meso-diaminopimelate (m-DAP or DL-DAP), required for both lysine and peptidoglycan biosynthesis. Catalyzes the direct conversion of tetrahydrodipicolinate to LL-diaminopimelate. The chain is LL-diaminopimelate aminotransferase from Nostoc punctiforme (strain ATCC 29133 / PCC 73102).